Reading from the N-terminus, the 430-residue chain is Aspartate--tRNA(Asp/Asn) ligase (430 aa).

E168 contacts L-aspartate. Positions 190–193 (QLYK) are aspartate. An L-aspartate-binding site is contributed by R212. Residues 212–214 (RAE), 220–222 (RHL), and E353 each bind ATP. Mg(2+)-binding residues include E353 and S356. Positions 356 and 360 each coordinate L-aspartate. Residue 401 to 404 (GAER) coordinates ATP.

It belongs to the class-II aminoacyl-tRNA synthetase family. Type 2 subfamily. In terms of assembly, homodimer. Requires Mg(2+) as cofactor.

The protein resides in the cytoplasm. It carries out the reaction tRNA(Asx) + L-aspartate + ATP = L-aspartyl-tRNA(Asx) + AMP + diphosphate. Functionally, aspartyl-tRNA synthetase with relaxed tRNA specificity since it is able to aspartylate not only its cognate tRNA(Asp) but also tRNA(Asn). Reaction proceeds in two steps: L-aspartate is first activated by ATP to form Asp-AMP and then transferred to the acceptor end of tRNA(Asp/Asn). The protein is Aspartate--tRNA(Asp/Asn) ligase of Archaeoglobus fulgidus (strain ATCC 49558 / DSM 4304 / JCM 9628 / NBRC 100126 / VC-16).